A 287-amino-acid polypeptide reads, in one-letter code: Probable endoribonuclease YicC (287 aa).

It belongs to the YicC/YloC family. It depends on a divalent metal cation as a cofactor.

Functionally, probably a ssRNA endonuclease. Might contribute to small RNA (sRNA) regulation. This is Probable endoribonuclease YicC from Haemophilus influenzae (strain ATCC 51907 / DSM 11121 / KW20 / Rd).